We begin with the raw amino-acid sequence, 311 residues long: Formimidoylglutamase (311 aa).

Residues histidine 130, aspartate 155, histidine 157, aspartate 159, cysteine 242, and aspartate 244 each contribute to the Mn(2+) site.

It belongs to the arginase family. The cofactor is Mn(2+).

It catalyses the reaction N-formimidoyl-L-glutamate + H2O = formamide + L-glutamate. It functions in the pathway amino-acid degradation; L-histidine degradation into L-glutamate; L-glutamate from N-formimidoyl-L-glutamate (hydrolase route): step 1/1. Catalyzes the conversion of N-formimidoyl-L-glutamate to L-glutamate and formamide. The polypeptide is Formimidoylglutamase (Staphylococcus aureus (strain MSSA476)).